The sequence spans 121 residues: Met-lysine-1b (121 aa).

A signal peptide spans 1–22; the sequence is MKSFVFALALIVAFACISESKS. Positions 23–69 are excised as a propeptide; that stretch reads DHTGYEEEENLEDSELTDLVAAALLEELAEASEMDDLSYTEEAGGER. Position 120 is a methionine amide (methionine 120).

In terms of tissue distribution, expressed by the venom gland.

The protein localises to the secreted. In terms of biological role, shows no antimicrobial activity against Gram-positive bacterium B.subtilis B-501 or Gram-negative bacterium E.coli DH5-alpha at concentrations up to 20 ug/ml. Shows no toxicity towards insect (S.carnaria) larvae. The polypeptide is Met-lysine-1b (Lachesana tarabaevi (Spider)).